A 134-amino-acid chain; its full sequence is Crustacean hyperglycemic hormones isoform A (134 aa).

The first 24 residues, 1-24 (MMACRTLCLVVVMVASLGTSGVGG), serve as a signal peptide directing secretion. Gln61 carries the post-translational modification Pyrrolidone carboxylic acid. D-phenylalanine; in form CHH-A-II is present on Phe63. 3 cysteine pairs are disulfide-bonded: Cys67–Cys103, Cys83–Cys99, and Cys86–Cys112. Residue Val132 is modified to Valine amide.

The protein belongs to the arthropod CHH/MIH/GIH/VIH hormone family. Post-translationally, stereoinversion of L-Phe (form CHH-A-I) to D-Phe (form CHH-A-II). As to expression, produced by the medulla terminalis X-organ in the eyestalks and transported to the sinus gland where they are stored and released. Present also in the ventral nervous system.

The protein resides in the secreted. In terms of biological role, CHH is the most abundant hormone in the sinus gland of isopods and decapods which controls the blood sugar level. Has a secretagogue action over the amylase released from the midgut gland. May act as a stress hormone. Functionally, MIH may inhibit Y-organs where molting hormone (ecdysteroid) is secreted and a molting cycle is initiated when MIH secretion diminishes or stops. This is Crustacean hyperglycemic hormones isoform A from Homarus americanus (American lobster).